The sequence spans 176 residues: uncharacterized protein (176 aa).

Residues 87–100 (ASASSQLRASRVQS) are compositionally biased toward low complexity. The disordered stretch occupies residues 87–109 (ASASSQLRASRVQSGTRQSARAG).

This is an uncharacterized protein from Homo sapiens (Human).